The chain runs to 197 residues: Translation initiation factor IF-3 (197 aa).

This sequence belongs to the IF-3 family. As to quaternary structure, monomer.

The protein resides in the cytoplasm. In terms of biological role, IF-3 binds to the 30S ribosomal subunit and shifts the equilibrium between 70S ribosomes and their 50S and 30S subunits in favor of the free subunits, thus enhancing the availability of 30S subunits on which protein synthesis initiation begins. This chain is Translation initiation factor IF-3, found in Prosthecochloris aestuarii (strain DSM 271 / SK 413).